Consider the following 377-residue polypeptide: Leukocyte elastase inhibitor (377 aa).

Position 1 is an N-acetylmethionine (Met1). Lys136 is modified (N6-acetyllysine). The residue at position 298 (Ser298) is a Phosphoserine. Positions 349–377 are CARD-binding motif (CBM); sequence EFVADHPFIFFIRHKPSSNILFLGRLSSP.

It belongs to the serpin family. Ov-serpin subfamily. As to quaternary structure, monomer. Interacts (via C-terminus) with CASP1; CASP4 (via CARD domain) and CASP5; these interactions regulate the activity of inflammatory caspases. Interacts with PRTN3. Interacts with GZMH.

It localises to the secreted. The protein resides in the cytoplasm. Its subcellular location is the cytolytic granule. The protein localises to the early endosome. Neutrophil serine protease inhibitor that plays an essential role in the regulation of the innate immune response, inflammation and cellular homeostasis. Acts primarily to protect the cell from proteases released in the cytoplasm during stress or infection. These proteases are important in killing microbes but when released from granules, these potent enzymes also destroy host proteins and contribute to mortality. Regulates the activity of the neutrophil proteases elastase, cathepsin G, proteinase-3, chymase, chymotrypsin, and kallikrein-3. Also acts as a potent intracellular inhibitor of GZMH by directly blocking its proteolytic activity. During inflammation, limits the activity of inflammatory caspases CASP1, CASP4 and CASP5 by suppressing their caspase-recruitment domain (CARD) oligomerization and enzymatic activation. When secreted, promotes the proliferation of beta-cells via its protease inhibitory function. This Bos taurus (Bovine) protein is Leukocyte elastase inhibitor (SERPINB1).